A 476-amino-acid chain; its full sequence is MCRPTDSDSGPALPSIPHQYWIIHGATYDLASYIKSHPGGDEAILLGRGRDCTELFEQYHVLNNKHLRVLERFRVTLPAAKVATNNLKEDMVSTISAFEGEEADAAAVVGIQQPAAPARVAHQSDPFYEDIKAMVRAHGNTKMSAPFVILHCLHVVGLIWSMKLWWQGAFISAFILPYFLWVLCAAMVHDGGHFAHSKRPLVNKLLTHTGALFTNSVGCWYLQHNILHHSYTNLVGKDGDLDSHHPYMRIHPEQSMLPANIHHAVRFFSHLIMYNFAHIGLTMISPLSYFRGVAAQKKGTADAKQAQDAQTVAQYHSTVMLQLVTVGAFYITPFLRFDFSRALLLTLLPTFMMSVAFMVIAQVSHIQMDAEAPSADLEKLHWARRMALTSVDYSQESTLWAYLTIGLNMQSLHHIVPGVSYSQLPRLYPAYRAICEKHGIKLLERRNLAHAFWTHLQTLWVLSKTHSFVEVARKLA.

Residues 10-75 (GPALPSIPHQ…HLRVLERFRV (66 aa)) enclose the Cytochrome b5 heme-binding domain. Residues H37 and H60 each contribute to the heme site. Transmembrane regions (helical) follow at residues 146-166 (PFVI…KLWW) and 168-188 (GAFI…AAMV). Residues 189 to 193 (HDGGH) carry the Histidine box-1 motif. Positions 224 to 229 (HNILHH) match the Histidine box-2 motif. Transmembrane regions (helical) follow at residues 267 to 287 (FFSH…ISPL), 315 to 335 (YHST…TPFL), and 343 to 363 (LLLT…IAQV). The Histidine box-3 motif lies at 410–414 (QSLHH).

The protein belongs to the fatty acid desaturase type 1 family.

It localises to the membrane. It carries out the reaction a (9Z,12Z)-octadecadienoyl-containing glycerolipid + 2 Fe(II)-[cytochrome b5] + O2 + 2 H(+) = a (5Z,9Z,12Z)-octadecatrienoyl-containing glycerolipid + 2 Fe(III)-[cytochrome b5] + 2 H2O. The catalysed reaction is (9Z,12Z,15Z)-octadecatrienoyl-containing glycerolipid + 2 Fe(II)-[cytochrome b5] + O2 + 2 H(+) = a (5Z,9Z,12Z,15Z)-octadecatetraenoyl-containing glycerolipid + 2 Fe(III)-[cytochrome b5] + 2 H2O. Its pathway is lipid metabolism; polyunsaturated fatty acid biosynthesis. Front-end desaturase having a omega-13 desaturase activity for omega-9 unsaturated C18/C20 fatty acids. Strong substrate preferences for linoleic acid and alpha-linolenic acid for the production of pinolenic and coniferonic acids respectively. No desaturase activity for dihomo gamma-linolenic acid and eicosatertraenoic acid. The protein is Acyl-lipid omega-13 desaturase of Chlamydomonas reinhardtii (Chlamydomonas smithii).